Consider the following 250-residue polypeptide: Ribonuclease PH (250 aa).

Phosphate is bound by residues arginine 99 and 137-139 (GTR).

This sequence belongs to the RNase PH family. As to quaternary structure, homohexameric ring arranged as a trimer of dimers.

The catalysed reaction is tRNA(n+1) + phosphate = tRNA(n) + a ribonucleoside 5'-diphosphate. Phosphorolytic 3'-5' exoribonuclease that plays an important role in tRNA 3'-end maturation. Removes nucleotide residues following the 3'-CCA terminus of tRNAs; can also add nucleotides to the ends of RNA molecules by using nucleoside diphosphates as substrates, but this may not be physiologically important. Probably plays a role in initiation of 16S rRNA degradation (leading to ribosome degradation) during starvation. The sequence is that of Ribonuclease PH from Bordetella parapertussis (strain 12822 / ATCC BAA-587 / NCTC 13253).